The primary structure comprises 565 residues: MRQSKFFMPTLKEAPSDAVAESHKLMIRGGYIRQVTAGVYAYLPLGYRVLRKAESIIEQEMDNINVPEMMMPHLLPATLWQESGRYQKYGAEMFKLKDRHGRESLLGPTHEETFTEIIAKNLKSYKQMPLALYQIQTKFRDENRPRFGLLRGREFVMLDGYSFAATREQLDQQFDDQKSAYKRIFKRAGVTVHPVIADSGTMGGKNSTEFQAPAAIGEDTIATNEKGTYAANLEMAKSIDTFKQEPEEAKELTKVATPACDTIKKLAEFLDVPATRIVKSILYIADDQKVLVLIRGDKQINEVKLGHVLDADDIHEANTEDLKEITGSEKGGVGPVNADWADKIIADETVKGLYNVVVGAGETDYQFKNANLDRDFKVDEFADIRTANEGEPDPVDHLPLKFTTSIEVGHIFKLGTYYTKTMGADFLDQNGKAQPVIMGSYGIGVTRMLSAVVEQHLTDRGVAWPKEIAPFEIHIVQMKMNKEDQTELAEKLEKKFSEKYDVLYDDRKERAGVKFADADLVGAPVRITIGKKAADGIVEVKRPTDEKAVEMSIDELDKFVNQELG.

The protein belongs to the class-II aminoacyl-tRNA synthetase family. ProS type 1 subfamily. As to quaternary structure, homodimer.

The protein resides in the cytoplasm. The enzyme catalyses tRNA(Pro) + L-proline + ATP = L-prolyl-tRNA(Pro) + AMP + diphosphate. In terms of biological role, catalyzes the attachment of proline to tRNA(Pro) in a two-step reaction: proline is first activated by ATP to form Pro-AMP and then transferred to the acceptor end of tRNA(Pro). As ProRS can inadvertently accommodate and process non-cognate amino acids such as alanine and cysteine, to avoid such errors it has two additional distinct editing activities against alanine. One activity is designated as 'pretransfer' editing and involves the tRNA(Pro)-independent hydrolysis of activated Ala-AMP. The other activity is designated 'posttransfer' editing and involves deacylation of mischarged Ala-tRNA(Pro). The misacylated Cys-tRNA(Pro) is not edited by ProRS. This is Proline--tRNA ligase from Lactobacillus acidophilus (strain ATCC 700396 / NCK56 / N2 / NCFM).